The sequence spans 1108 residues: Valine--tRNA ligase, mitochondrial 1 (1108 aa).

The transit peptide at 1–46 (MSLLFLRRAKPLFVSCCSATHSRSSFLSPTLTNQLVRSFHGSRTMS) directs the protein to the mitochondrion. A compositionally biased stretch (basic and acidic residues) spans 57–93 (ELERKKKKEEKAKEKELKKQKALEKERLAELKAKQAK). The tract at residues 57–138 (ELERKKKKEE…RKRLSSQMAK (82 aa)) is disordered. A 'HIGH' region motif is present at residues 177-187 (PNVTGALHIGH). The 'KMSKS' region signature appears at 695 to 699 (KMSKS). An ATP-binding site is contributed by Lys-698. Residues 1032–1064 (AINTEAEQEKIRNKIGELQKQKEKLQKMMSVST) adopt a coiled-coil conformation.

This sequence belongs to the class-I aminoacyl-tRNA synthetase family.

The protein localises to the mitochondrion. It localises to the cytoplasm. Its subcellular location is the cytosol. It catalyses the reaction tRNA(Val) + L-valine + ATP = L-valyl-tRNA(Val) + AMP + diphosphate. Its function is as follows. Required for embryo development and seed viability. This Arabidopsis thaliana (Mouse-ear cress) protein is Valine--tRNA ligase, mitochondrial 1.